Reading from the N-terminus, the 224-residue chain is Cytidylate kinase (224 aa).

11-19 lines the ATP pocket; it reads GPAGAGKST.

Belongs to the cytidylate kinase family. Type 1 subfamily.

Its subcellular location is the cytoplasm. It catalyses the reaction CMP + ATP = CDP + ADP. The enzyme catalyses dCMP + ATP = dCDP + ADP. The sequence is that of Cytidylate kinase from Lysinibacillus sphaericus (strain C3-41).